The following is a 562-amino-acid chain: Ycf55-like protein (562 aa).

Residues 7–125 (TIVIVDEDPV…DLVTGLKQVH (119 aa)) enclose the Response regulatory domain.

It belongs to the ycf55 family.

This Synechocystis sp. (strain ATCC 27184 / PCC 6803 / Kazusa) protein is Ycf55-like protein.